Reading from the N-terminus, the 308-residue chain is Ecto-ADP-ribosyltransferase 5 (308 aa).

An N-terminal signal peptide occupies residues 1–23; sequence MILEDLLMVLSCLALHILWKVQA. Cysteine 43 and cysteine 259 are oxidised to a cystine. A TR mART core domain is found at 63–253; the sequence is ALLRESWEAA…IVTLWSYNQT (191 aa). Tyrosine 100 is a binding site for NAD(+). Asparagine 102 carries an N-linked (GlcNAc...) asparagine glycan. NAD(+) is bound by residues arginine 161 and glutamine 181. The active site involves arginine 161. Serine 184 is a catalytic residue. A glycan (N-linked (GlcNAc...) asparagine) is linked at asparagine 197. NAD(+) is bound at residue serine 215. Glutamate 222 is an active-site residue. N-linked (GlcNAc...) asparagine glycosylation occurs at asparagine 251.

The protein belongs to the Arg-specific ADP-ribosyltransferase family.

It localises to the secreted. The protein resides in the membrane. The catalysed reaction is L-arginyl-[protein] + NAD(+) = N(omega)-(ADP-D-ribosyl)-L-arginyl-[protein] + nicotinamide + H(+). The sequence is that of Ecto-ADP-ribosyltransferase 5 (Art5) from Rattus norvegicus (Rat).